The primary structure comprises 440 residues: Transposon Ty1-MR1 Gag polyprotein (440 aa).

Polar residues-rich tracts occupy residues 1–31 (MESQ…TTQD), 46–60 (VSTQ…TPLS), and 137–168 (VGTH…TNQH). Disordered regions lie at residues 1-88 (MESQ…YPQQ), 137-174 (VGTH…PPPI), and 350-424 (QQES…TTEP). The interval 299 to 401 (NNGIPINNKV…NSQSRTARAH (103 aa)) is RNA-binding. The span at 363–372 (SPSDEKKDSR) shows a compositional bias: basic and acidic residues. A compositionally biased stretch (polar residues) spans 373 to 411 (TYTNTTKPKSITRNSQKPNNSQSRTARAHNVSTFNNSPG).

In terms of assembly, homotrimer.

The protein localises to the cytoplasm. In terms of biological role, capsid protein (CA) is the structural component of the virus-like particle (VLP), forming the shell that encapsulates the retrotransposons dimeric RNA genome. The particles are assembled from trimer-clustered units and there are holes in the capsid shells that allow for the diffusion of macromolecules. CA also has nucleocapsid-like chaperone activity, promoting primer tRNA(i)-Met annealing to the multipartite primer-binding site (PBS), dimerization of Ty1 RNA and initiation of reverse transcription. The chain is Transposon Ty1-MR1 Gag polyprotein (TY1A-MR1) from Saccharomyces cerevisiae (strain ATCC 204508 / S288c) (Baker's yeast).